Consider the following 388-residue polypeptide: UDP-N-acetylglucosamine--N-acetylmuramyl-(pentapeptide) pyrophosphoryl-undecaprenol N-acetylglucosamine transferase (388 aa).

UDP-N-acetyl-alpha-D-glucosamine is bound by residues 42-44 (TGG), N159, R195, S223, I277, and Q322.

It belongs to the glycosyltransferase 28 family. MurG subfamily.

It is found in the cell inner membrane. The catalysed reaction is di-trans,octa-cis-undecaprenyl diphospho-N-acetyl-alpha-D-muramoyl-L-alanyl-D-glutamyl-meso-2,6-diaminopimeloyl-D-alanyl-D-alanine + UDP-N-acetyl-alpha-D-glucosamine = di-trans,octa-cis-undecaprenyl diphospho-[N-acetyl-alpha-D-glucosaminyl-(1-&gt;4)]-N-acetyl-alpha-D-muramoyl-L-alanyl-D-glutamyl-meso-2,6-diaminopimeloyl-D-alanyl-D-alanine + UDP + H(+). It functions in the pathway cell wall biogenesis; peptidoglycan biosynthesis. Functionally, cell wall formation. Catalyzes the transfer of a GlcNAc subunit on undecaprenyl-pyrophosphoryl-MurNAc-pentapeptide (lipid intermediate I) to form undecaprenyl-pyrophosphoryl-MurNAc-(pentapeptide)GlcNAc (lipid intermediate II). The protein is UDP-N-acetylglucosamine--N-acetylmuramyl-(pentapeptide) pyrophosphoryl-undecaprenol N-acetylglucosamine transferase of Albidiferax ferrireducens (strain ATCC BAA-621 / DSM 15236 / T118) (Rhodoferax ferrireducens).